The chain runs to 415 residues: METTATILHADLDAFYASVEQLLDPSLRGKPIAVGGGVVLAASYEARAFGVRGGMPGRKARELCPQLIFVGGNFSHYQRLGDAAIKVLDDFTPVVERISIDEAFADVAGCTHLFGQPRDIATAIRHRVRAELGLPISIGVARTKHLAKIASQVAKPDGLVVVDPGTELDFLHDLPVSLMWGVGPATKSRLAEIGIQTIGELARTHSGALTRLLGPAAGEKLAALAWNRDPRKLETRRRAHSAGAQSALGQKPAVARVIVPTLLHLADRVASRLRAKARPGRTVTVRVRFADLSAVTRSITLDQPISATTMLAEIAGDLVRGVLADHPREKTISLLAISVSHLEESAELQLDLPLGLADEKRRPGSKKGLARFGADRAIDKIRERFGKQAVGYGTVALEAARSVPDEFRELAEKEL.

A UmuC domain is found at 7 to 183 (ILHADLDAFY…LPVSLMWGVG (177 aa)). Mg(2+)-binding residues include D11 and D101. E102 is a catalytic residue.

This sequence belongs to the DNA polymerase type-Y family. Monomer. It depends on Mg(2+) as a cofactor.

It localises to the cytoplasm. The enzyme catalyses DNA(n) + a 2'-deoxyribonucleoside 5'-triphosphate = DNA(n+1) + diphosphate. Its function is as follows. Poorly processive, error-prone DNA polymerase involved in untargeted mutagenesis. Copies undamaged DNA at stalled replication forks, which arise in vivo from mismatched or misaligned primer ends. These misaligned primers can be extended by PolIV. Exhibits no 3'-5' exonuclease (proofreading) activity. May be involved in translesional synthesis, in conjunction with the beta clamp from PolIII. In Mesorhizobium japonicum (strain LMG 29417 / CECT 9101 / MAFF 303099) (Mesorhizobium loti (strain MAFF 303099)), this protein is DNA polymerase IV 2 (dinB2).